A 396-amino-acid chain; its full sequence is ATP-dependent RNA helicase eIF4A (396 aa).

Positions 22 to 50 match the Q motif motif; it reads HKFDELKLKEVLLRGIYGYGFVDPSAIQQ. One can recognise a Helicase ATP-binding domain in the interval 53-223; it reads ILPIIEGHDV…DKFMNKPVRI (171 aa). An ATP-binding site is contributed by 66–73; the sequence is AQSGTGKT. The DEAD box signature appears at 171 to 174; it reads DEAD. The 162-residue stretch at 234–395 folds into the Helicase C-terminal domain; the sequence is GIQQYYINVE…ELPANIADLF (162 aa).

Belongs to the DEAD box helicase family. eIF4A subfamily. In terms of assembly, component of the eIF4F complex, which composition varies with external and internal environmental conditions. It is composed of at least eIF4A, eIF4E and eIF4G.

It is found in the cytoplasm. It carries out the reaction ATP + H2O = ADP + phosphate + H(+). In terms of biological role, ATP-dependent RNA helicase which is a subunit of the eIF4F complex involved in cap recognition and is required for mRNA binding to ribosome. In the current model of translation initiation, eIF4A unwinds RNA secondary structures in the 5'-UTR of mRNAs which is necessary to allow efficient binding of the small ribosomal subunit, and subsequent scanning for the initiator codon. In Eremothecium gossypii (strain ATCC 10895 / CBS 109.51 / FGSC 9923 / NRRL Y-1056) (Yeast), this protein is ATP-dependent RNA helicase eIF4A (TIF1).